Here is a 679-residue protein sequence, read N- to C-terminus: Methionine--tRNA ligase (679 aa).

Residues 14–24 (PYANGSIHLGH) carry the 'HIGH' region motif. Zn(2+) is bound by residues cysteine 145, cysteine 148, cysteine 158, and cysteine 161. Positions 331-335 (KMSKS) match the 'KMSKS' region motif. Lysine 334 lines the ATP pocket. The tRNA-binding domain occupies 577–679 (TFAAVDLRVA…SGAKPGQRIK (103 aa)).

Belongs to the class-I aminoacyl-tRNA synthetase family. MetG type 1 subfamily. In terms of assembly, homodimer. The cofactor is Zn(2+).

The protein resides in the cytoplasm. The catalysed reaction is tRNA(Met) + L-methionine + ATP = L-methionyl-tRNA(Met) + AMP + diphosphate. Functionally, is required not only for elongation of protein synthesis but also for the initiation of all mRNA translation through initiator tRNA(fMet) aminoacylation. The sequence is that of Methionine--tRNA ligase from Pseudomonas entomophila (strain L48).